A 366-amino-acid chain; its full sequence is Peptide chain release factor 2 (366 aa).

Position 253 is an N5-methylglutamine (Gln253).

Belongs to the prokaryotic/mitochondrial release factor family. Post-translationally, methylated by PrmC. Methylation increases the termination efficiency of RF2.

The protein resides in the cytoplasm. Peptide chain release factor 2 directs the termination of translation in response to the peptide chain termination codons UGA and UAA. The sequence is that of Peptide chain release factor 2 (prfB) from Buchnera aphidicola subsp. Baizongia pistaciae (strain Bp).